Consider the following 2555-residue polypeptide: Ubiquitin carboxyl-terminal hydrolase 9Y (2555 aa).

The disordered stretch occupies residues 1 to 66 (MTAITHGSPV…APPQHEDEEP (66 aa)). Polar residues predominate over residues 13-45 (NDSQGQVLDGQSQHLFQQNQTSSPDSSNENSVA). At serine 589 the chain carries Phosphoserine. Phosphothreonine is present on threonine 591. The disordered stretch occupies residues 972–997 (NMPSSPDSSSDSSTASPGNHRNHYND). Over residues 974–984 (PSSPDSSSDSS) the composition is skewed to low complexity. One can recognise a USP domain in the interval 1559 to 1958 (VGLKNAGATC…NAYILFYEQM (400 aa)). Cysteine 1568 functions as the Nucleophile in the catalytic mechanism. Residues cysteine 1729, histidine 1731, cysteine 1773, and cysteine 1776 each contribute to the Zn(2+) site. The Proton acceptor role is filled by histidine 1881. Serine 2444 bears the Phosphoserine mark. Over residues 2476 to 2485 (PEEEPDDQDA) the composition is skewed to acidic residues. Positions 2476 to 2555 (PEEEPDDQDA…EVSSPQMKDQ (80 aa)) are disordered. 2 stretches are compositionally biased toward polar residues: residues 2504 to 2514 (PASQYQQNNHV) and 2528 to 2555 (NNPQ…MKDQ). Tyrosine 2541 bears the Phosphotyrosine mark. The residue at position 2548 (serine 2548) is a Phosphoserine.

The protein belongs to the peptidase C19 family. In terms of tissue distribution, widely expressed in embryonic and adult tissues.

The catalysed reaction is Thiol-dependent hydrolysis of ester, thioester, amide, peptide and isopeptide bonds formed by the C-terminal Gly of ubiquitin (a 76-residue protein attached to proteins as an intracellular targeting signal).. The protein operates within protein modification; protein ubiquitination. In terms of biological role, deubiquitinase that mediates deubiquitination of target proteins. May stabilize target proteins that are important for male germ cell development. The sequence is that of Ubiquitin carboxyl-terminal hydrolase 9Y from Homo sapiens (Human).